Consider the following 297-residue polypeptide: Endonuclease G, mitochondrial (297 aa).

Residues 1-48 constitute a mitochondrion transit peptide; sequence MRALRAGLTLASGAGLGAVVEGWRRRREDARAAPGLLGRLPVLPVAAA. T128 bears the Phosphothreonine; by GSK3-beta mark. Catalysis depends on H141, which acts as the Proton acceptor. Residue N172 participates in Mg(2+) binding. Residues 286-296 are essential for deoxyribonuclease activity; sequence AGSLKAITAGS. Position 288 is a phosphoserine; by GSK3-beta (S288).

Belongs to the DNA/RNA non-specific endonuclease family. Homodimer; disulfide-linked. Homodimerization is essential for enzyme activity. Interacts with YWHAG. Mg(2+) is required as a cofactor. In terms of processing, GSK3-beta-mediated dual phosphorylations at Thr-128 and Ser-288 is necessary for its interaction with YWHAG and the induction of autophagy.

The protein resides in the mitochondrion. In terms of biological role, endonuclease that preferentially catalyzes the cleavage of double-stranded 5-hydroxymethylcytosine (5hmC)-modified DNA. The 5hmC-modified nucleotide does not increase the binding affinity, but instead increases the efficiency of cutting and specifies the site of cleavage for the modified DNAs. Shows significantly higher affinity for four-stranded Holliday junction over duplex and single-stranded DNAs. Promotes conservative recombination when the DNA is 5hmC-modified. Promotes autophagy through the suppression of mTOR by its phosphorylation-mediated interaction with YWHAG and its endonuclease activity-mediated DNA damage response. GSK3-beta mediated phosphorylation of ENDOG enhances its interaction with YWHAG, leading to the release of TSC2 and PIK3C3 from YWHAG resulting in mTOR pathway suppression and autophagy initiation. Promotes cleavage of mtDNA in response to oxidative and nitrosative stress, in turn inducing compensatory mtDNA replication. This chain is Endonuclease G, mitochondrial (ENDOG), found in Homo sapiens (Human).